Consider the following 183-residue polypeptide: Small ribosomal subunit protein eS10z (183 aa).

Residues 91 to 183 are disordered; the sequence is LKKSARPPGR…GAGPTSSSME (93 aa). Residues 109-130 are compositionally biased toward basic and acidic residues; the sequence is DRPRGPPRFEGDRPRFGDRDGY. Gly residues-rich tracts occupy residues 131–146 and 161–175; these read RGGP…GEKG and GRPG…GFGA.

Belongs to the eukaryotic ribosomal protein eS10 family.

The protein resides in the cytoplasm. This chain is Small ribosomal subunit protein eS10z, found in Oryza sativa subsp. japonica (Rice).